The primary structure comprises 191 residues: Calcium and integrin-binding protein 1 (191 aa).

Gly2 carries the N-myristoyl glycine lipid modification. 2 EF-hand domains span residues 103–138 (TPDIKSHYAFRIFDFDDDGTLDREDLSQLVNCLTGE) and 148–183 (EMKQLIDNILEESDIDRDGTINLSEFQHVISRSPDF). The Ca(2+) site is built by Asp116, Asp118, Asp120, Thr122, Asp127, Asp161, Asp163, Asp165, Thr167, and Glu172.

In terms of assembly, monomer. Interacts with the heterodimeric integrin alpha-IIb/beta3 (ITGA2B-ITGB3). Interacts with ITGA2B (via cytoplasmic domain); the interaction is direct and calcium-dependent. Interacts with the protein kinases PLK2/SNK and PRKDC (via the region immediately upstream of the kinase domain). Interacts with PLK3; the interaction inhibits PLK3 kinase activity. Interacts with PSEN2. Interacts (via C-terminus) with F8. Interacts with NBR1 (via C-terminus). Interacts with FEZ1 (via C-terminus). Interacts with UBR5 (via C-terminus); the interaction is sensitive to DNA damage, and may target CIB1 for ubiquitin-mediated degradation. Interacts with IFI6; the interaction is direct. Interacts with BCL2. Interacts with TAS1R2 (via C-terminus); the interaction is independent of the myristoylation state of CIB1. Interacts with ITPR3; the interaction occurs in a calcium dependent manner. Interacts with PTK2/FAK1. Interacts with MAP3K5; the interaction inhibits MAP3K5 activation by phosphorylation, and its subsequent interaction with TRAF2. Interacts (via C-terminal region) with STMN2 (via the N-terminal region); the interaction is direct, occurs in a calcium-dependent manner and attenuates the STMN2-induced neurite outgrowth inhibition. Interacts with SPHK1, the interaction occurs in a calcium-dependent manner. Interacts with ITGA2B (via C-terminal cytoplasmic tail); the interaction occurs upon platelet aggregation and is stabilized/increased in a calcium and magnesium-dependent manner. Interacts with PAK1 (via N-terminal region); the interaction is direct and occurs in a calcium-dependent manner. Interacts with RAC3 (via C-terminal region); the interaction induces their association with the cytoskeleton upon alpha-IIb/beta3 integrin-mediated adhesion. Interacts with ITGA5 and ITGAV. Interacts with MYO1C. Interacts with ITGA2B (via C-terminal cytoplasmic tail region). Interacts (via C-terminal region) with PPP3R1 isoform 1 and isoform 2; the interactions increase upon cardiomyocytes hypertrophy. Interacts with CACNA1C; the interaction increases upon cardiomyocytes hypertrophy. Interacts and forms a complex with TMC6 and TMC8; the interaction stabilizes each component of the complex. As to expression, expressed strongly in Sertoli cells, weakly in pachytene spermatocytes, round spermatids and condensing spermatids (at protein level). Expressed in testis. Expressed in cardiac myocytes and endothelial cells. Expressed in heart, liver, spleen, lung, kidney, brain and inner ear. In the inner ear, expressed in the vestibule, basilar membrane and spiral ganglion cells.

It localises to the membrane. Its subcellular location is the cell membrane. The protein resides in the sarcolemma. The protein localises to the apical cell membrane. It is found in the cell projection. It localises to the ruffle membrane. Its subcellular location is the filopodium tip. The protein resides in the growth cone. The protein localises to the lamellipodium. It is found in the cytoplasm. It localises to the cytoskeleton. Its subcellular location is the microtubule organizing center. The protein resides in the centrosome. The protein localises to the perinuclear region. It is found in the nucleus. It localises to the neuron projection. Its subcellular location is the perikaryon. Functionally, calcium-binding protein that plays a role in the regulation of numerous cellular processes, such as cell differentiation, cell division, cell proliferation, cell migration, thrombosis, angiogenesis, cardiac hypertrophy and apoptosis. Involved in bone marrow megakaryocyte differentiation by negatively regulating thrombopoietin-mediated signaling pathway. Participates in the endomitotic cell cycle of megakaryocyte, a form of mitosis in which both karyokinesis and cytokinesis are interrupted. Plays a role in integrin signaling by negatively regulating alpha-IIb/beta3 activation in thrombin-stimulated megakaryocytes preventing platelet aggregation. Up-regulates PTK2/FAK1 activity, and is also needed for the recruitment of PTK2/FAK1 to focal adhesions; it thus appears to play an important role in focal adhesion formation. Positively regulates cell migration on fibronectin in a CDC42-dependent manner, the effect being negatively regulated by PAK1. Functions as a negative regulator of stress activated MAP kinase (MAPK) signaling pathways. Down-regulates inositol 1,4,5-trisphosphate receptor-dependent calcium signaling. Involved in sphingosine kinase SPHK1 translocation to the plasma membrane in a N-myristoylation-dependent manner preventing TNF-alpha-induced apoptosis. Regulates serine/threonine-protein kinase PLK3 activity for proper completion of cell division progression. Plays a role in microtubule (MT) dynamics during neuronal development; disrupts the MT depolymerization activity of STMN2 attenuating NGF-induced neurite outgrowth and the MT reorganization at the edge of lamellipodia. Promotes cardiomyocyte hypertrophy via activation of the calcineurin/NFAT signaling pathway. Stimulates calcineurin PPP3R1 activity by mediating its anchoring to the sarcolemma. In ischemia-induced (pathological or adaptive) angiogenesis, stimulates endothelial cell proliferation, migration and microvessel formation by activating the PAK1 and ERK1/ERK2 signaling pathway. Also promotes cancer cell survival and proliferation. May regulate cell cycle and differentiation of spermatogenic germ cells, and/or differentiation of supporting Sertoli cells. Forms a complex with TMC6/EVER1 and TMC8/EVER2 in lymphocytes and keratynocytes where CIB1 stabilizes TMC6 and TMC8 levels and reciprocally. The protein is Calcium and integrin-binding protein 1 (Cib1) of Mus musculus (Mouse).